The sequence spans 234 residues: Sugar fermentation stimulation protein A (234 aa).

The segment at residues 201 to 220 (LLSEAQNKGVEVLAYKAELS) is a DNA-binding region (H-T-H motif).

Belongs to the SfsA family.

In terms of biological role, binds to DNA non-specifically. Could be a regulatory factor involved in maltose metabolism. In Salmonella dublin (strain CT_02021853), this protein is Sugar fermentation stimulation protein A.